A 583-amino-acid chain; its full sequence is L-arabonate dehydratase (583 aa).

Cysteine 56, cysteine 124, and cysteine 197 together coordinate [4Fe-4S] cluster.

It belongs to the IlvD/Edd family. In terms of assembly, homodimer. [4Fe-4S] cluster is required as a cofactor.

It catalyses the reaction L-arabinonate = 2-dehydro-3-deoxy-L-arabinonate + H2O. Its activity is regulated as follows. Activity is enhanced by Mg(2+), being optimal with a concentration of 1-10 mM Mg(2+). In terms of biological role, catalyzes the dehydration of L-arabonate to L-2-keto-3-deoxyarabonate (L-KDA). Is involved in a degradation pathway of L-arabinose that allows A.brasilense to grow on L-arabinose as a sole carbon source. To a lesser extent, can also use D-xylonate as substrate, but not D-galactonate, D-arabonate, and D-gluconate. This is L-arabonate dehydratase (araC) from Azospirillum brasilense.